Consider the following 483-residue polypeptide: MTEPLDWRFSQTFGGKGNEDASDANVVPAIEFDQTGDFIAVGDKGGKVLLLKRTHDKQSSKKSKLPEYRFYSEFQSHEPEFDYLKSLEIEEKINKIKWCPKQNDAQFLLTTNDKTIKLWKVYEKKIKQVSTSATTTGPSYNGSLASNNTRSPSHTTYIYNSSGAHNMNNNMNNSNNNNNLNNFKIPKLTTRETVVTATPRKIFQNAHAYHINSISLNSDGETYISSDDLRIHLWNLNINTECFNVVDIKPTNMEDLTEVITSAEFHPTSCNIFMYSSSKGTIKLGDLRSSALCDNHAKVFEEYEDPSNKSFFSEIISSISDIKFSRDGRYILSRDFLTLKLWDINMENKPVKTIQIHDYLKPKLCDLYENDCIFDKFECTLNHDGTQMLTGSYHNYLHIYDRNSKQDVCLEASKQATKSKTKTLTTKMKLRSSKKEPKKPEDIHPDAIEYTKKTLHCAWHPKDNLIAVGAANTVYLYAATENK.

WD repeat units lie at residues 22–61 (SDAN…QSSK) and 88–129 (EIEE…IKQV). Residues 132-152 (SATTTGPSYNGSLASNNTRSP) form a disordered region. WD repeat units lie at residues 206–244 (AHAY…ECFN), 255–295 (DLTE…LCDN), 314–352 (EIIS…KPVK), and 369–410 (ENDC…DVCL). Residues 421 to 443 (TKTLTTKMKLRSSKKEPKKPEDI) are disordered. Residues 433 to 443 (SKKEPKKPEDI) show a composition bias toward basic and acidic residues. The stretch at 449–483 (EYTKKTLHCAWHPKDNLIAVGAANTVYLYAATENK) is one WD 7 repeat.

This sequence belongs to the phosphatase 2A regulatory subunit B family. As to quaternary structure, PP2A consists of a trimeric holoenzyme, composed of a 37 kDa catalytic subunit (C subunit) and a 65 kDa constant regulatory subunit (A subunit), that associates with a variety of regulatory subunits (B subunit) such as phr2AB (B55) and psrA (B56 homolog). The trimer may partially dissociates into a core 'AC' dimer equally active compared to the trimer.

The protein localises to the cytoplasm. Its subcellular location is the cytosol. It localises to the cytoskeleton. The protein resides in the microtubule organizing center. It is found in the centrosome. In terms of biological role, the B regulatory subunit might modulate substrate selectivity and catalytic activity, and might also direct the localization of the catalytic enzyme to a particular subcellular compartment. This Dictyostelium discoideum (Social amoeba) protein is Serine/threonine-protein phosphatase 2A regulatory subunit phr2AB (phr2aB).